An 83-amino-acid polypeptide reads, in one-letter code: Mu-theraphotoxin-Hhn2e (83 aa).

A signal peptide spans 1–21 (MKASMFLALAGLVLLFVVGYA). The propeptide occupies 22 to 48 (SESEEKEFPRELLSKIFAVDDFKGEER). Disulfide bonds link cysteine 50–cysteine 65, cysteine 57–cysteine 70, and cysteine 64–cysteine 77. A Leucine amide modification is found at leucine 81.

This sequence belongs to the neurotoxin 10 (Hwtx-1) family. 15 (Hntx-3) subfamily. As to quaternary structure, monomer. As to expression, expressed by the venom gland.

It is found in the secreted. Functionally, lethal neurotoxin. Selectively blocks tetrodotoxin-sensitive voltage-gated sodium channels (Nav). Does not affect tetrodotoxin-resistant voltage-gated sodium channels or calcium channels. This Cyriopagopus hainanus (Chinese bird spider) protein is Mu-theraphotoxin-Hhn2e.